A 337-amino-acid polypeptide reads, in one-letter code: Basic membrane protein A1 (337 aa).

Positions 1 to 17 are cleaved as a signal peptide; the sequence is MNKLLLLILFECIIFLS. Residue C18 is the site of N-palmitoyl cysteine attachment. C18 carries S-diacylglycerol cysteine lipidation.

The protein belongs to the BMP lipoprotein family. As to quaternary structure, monomer.

Its subcellular location is the cell inner membrane. Immunogenic protein. May be part of an ABC-type nucleoside uptake system involved in the purine salvage pathway. The protein is Basic membrane protein A1 (bmpA1) of Borrelia garinii subsp. bavariensis (strain ATCC BAA-2496 / DSM 23469 / PBi) (Borreliella bavariensis).